Reading from the N-terminus, the 459-residue chain is MSHGRMNLALSLVFILCGLFNSIFCEKQQHSQKHMNLVLLKKISALSQKMEAHPKDFAQELFKALIIEDPRKNIIFSPMAMTTTLATLSLGIKSTMRTHHPEDLKLEPKLLDVHKYLQPLVHVGRELVKQKVLKHQHILFINRKMMVNQMLLQQISKLQGMDIQMIDFTDIEKAKKTISHHVAEKTHTKITNLITDLNPETILCLVNHIFFKGILKRAFQPKLTQKEVFFVNDQTKVQVDMMRKTERMLYSRSEELHATMVKMPCKGNVSLTLMLPDAGQFDTDLKKMTAKRAKLQKISDFRLVRLILPKLKISFKINFKHLLPKIDPKHILTATAISQAITSKAPLPNLEALHQAEIELSEHALTVDTAIHTDNLLKVPVKAKEVPAVVKVPMKAKEVPAVVKVPMNTKEVPVVVKVPMNTKEVPVVVKVNRPFLLFVEDEKTQRDLFVGKVLNPQVE.

Residues Met-1–Cys-25 form the signal peptide. The N-linked (GlcNAc...) asparagine glycan is linked to Asn-268.

It belongs to the serpin family. UTMP subfamily.

This is Uterine milk protein from Bos taurus (Bovine).